The following is a 235-amino-acid chain: Phosphatidylserine decarboxylase proenzyme (235 aa).

S204 functions as the Schiff-base intermediate with substrate; via pyruvic acid in the catalytic mechanism. S204 carries the post-translational modification Pyruvic acid (Ser); by autocatalysis.

Belongs to the phosphatidylserine decarboxylase family. PSD-A subfamily. Heterodimer of a large membrane-associated beta subunit and a small pyruvoyl-containing alpha subunit. Pyruvate is required as a cofactor. In terms of processing, is synthesized initially as an inactive proenzyme. Formation of the active enzyme involves a self-maturation process in which the active site pyruvoyl group is generated from an internal serine residue via an autocatalytic post-translational modification. Two non-identical subunits are generated from the proenzyme in this reaction, and the pyruvate is formed at the N-terminus of the alpha chain, which is derived from the carboxyl end of the proenzyme. The post-translation cleavage follows an unusual pathway, termed non-hydrolytic serinolysis, in which the side chain hydroxyl group of the serine supplies its oxygen atom to form the C-terminus of the beta chain, while the remainder of the serine residue undergoes an oxidative deamination to produce ammonia and the pyruvoyl prosthetic group on the alpha chain.

The protein resides in the cell membrane. The catalysed reaction is a 1,2-diacyl-sn-glycero-3-phospho-L-serine + H(+) = a 1,2-diacyl-sn-glycero-3-phosphoethanolamine + CO2. It participates in phospholipid metabolism; phosphatidylethanolamine biosynthesis; phosphatidylethanolamine from CDP-diacylglycerol: step 2/2. Catalyzes the formation of phosphatidylethanolamine (PtdEtn) from phosphatidylserine (PtdSer). In Mycobacterium sp. (strain KMS), this protein is Phosphatidylserine decarboxylase proenzyme.